The sequence spans 353 residues: Uroporphyrinogen decarboxylase (353 aa).

Substrate is bound by residues 27 to 31, phenylalanine 46, aspartate 76, tyrosine 152, serine 207, and histidine 321; that span reads RQAGR.

Belongs to the uroporphyrinogen decarboxylase family. Homodimer.

The protein resides in the cytoplasm. The enzyme catalyses uroporphyrinogen III + 4 H(+) = coproporphyrinogen III + 4 CO2. It functions in the pathway porphyrin-containing compound metabolism; protoporphyrin-IX biosynthesis; coproporphyrinogen-III from 5-aminolevulinate: step 4/4. In terms of biological role, catalyzes the decarboxylation of four acetate groups of uroporphyrinogen-III to yield coproporphyrinogen-III. The polypeptide is Uroporphyrinogen decarboxylase (Listeria monocytogenes serotype 4b (strain F2365)).